A 255-amino-acid polypeptide reads, in one-letter code: Tabinhibitin 7 (255 aa).

The signal sequence occupies residues 1–23 (MTSILVSSFLLATLVLQYATIDA). The Cell attachment site signature appears at 32 to 34 (RGD). Positions 67–211 (LSKINDVRDH…KARALLTCNF (145 aa)) constitute an SCP domain.

The protein belongs to the CRISP family. Expressed in salivary glands.

It localises to the secreted. In terms of biological role, inhibits platelet aggregation induced by all agonists tested (ADP, arachidonic acid, the thromboxane A2 analog U46619, thrombin, and snake venom snaclecs (TMVA that activates platelet through GPIB, and stejnulxin that specifically acts through GPVI (GP6))). May act by competing with fibrinogen for binding to glycoprotein IIb/IIIa (ITGA2B/ITGB3). This chain is Tabinhibitin 7, found in Tabanus yao (Horsefly).